The chain runs to 445 residues: Inward rectifier potassium channel 4 (445 aa).

Residues 1–55 lie on the Cytoplasmic side of the membrane; the sequence is MHGHNRNGQAHVPRRKRRNRFVKKNGQCNVYFANLSNKSQRYMADIFTTCVDTRW. A helical transmembrane segment spans residues 56–80; the sequence is RYMLMIFSAAFLVSWLFFGLLFWWI. Residues 81–119 lie on the Extracellular side of the membrane; sequence AFFHGDLEASPSVPAVGGPGGNGGESPNAPKPCIMHVNG. An intramembrane region (helical; Pore-forming) is located at residues 120-131; the sequence is FLGAFLFSVETQ. Residues 132–138 constitute an intramembrane region (pore-forming); it reads TTIGYGF. Residues 133–138 carry the Selectivity filter motif; the sequence is TIGYGF. The Extracellular portion of the chain corresponds to 139–147; sequence RCVTEECPL. The chain crosses the membrane as a helical span at residues 148–169; the sequence is AVIAVVVQSIVGCVIDSFMIGT. The Cytoplasmic segment spans residues 170 to 445; sequence IMAKMARPKK…NISYRRESRI (276 aa). Positions 443–445 match the PDZ-binding motif; it reads SRI.

It belongs to the inward rectifier-type potassium channel (TC 1.A.2.1) family. KCNJ4 subfamily. As to quaternary structure, homomultimeric and heteromultimeric association with KCNJ2 and KCNJ12. Interacts with DLG2 and DLG4. Associates, via its PDZ-recognition domain, with a complex containing LIN7A, LIN7B, LIN7C, DLG1, CASK and APBA1. Interacts with TAX1BP3. TAX1BP3 competes with LIN7 family members for KCNJ4 binding. Highly expressed in the forebrain, moderately in skeletal muscle. Im olfactory bulb, specifically expressed at the postsynaptic membrane of dendritic spines of granule cells.

Its subcellular location is the cell membrane. The protein localises to the postsynaptic cell membrane. The protein resides in the cytoplasmic vesicle membrane. It catalyses the reaction K(+)(in) = K(+)(out). Functionally, inward rectifier potassium channels are characterized by a greater tendency to allow potassium to flow into the cell rather than out of it. Their voltage dependence is regulated by the concentration of extracellular potassium; as external potassium is raised, the voltage range of the channel opening shifts to more positive voltages. The inward rectification is mainly due to the blockage of outward current by internal magnesium. Can be blocked by extracellular barium and cesium. This chain is Inward rectifier potassium channel 4 (Kcnj4), found in Mus musculus (Mouse).